Reading from the N-terminus, the 144-residue chain is Large ribosomal subunit protein uL15 (144 aa).

The disordered stretch occupies residues 1–54 (MRLNTLSPAEGSKKAGKRLGRGIGSGLGKTGGRGHKGQKSRSGGGVRRGFEGGQ). The segment covering 21–31 (RGIGSGLGKTG) has biased composition (gly residues).

The protein belongs to the universal ribosomal protein uL15 family. As to quaternary structure, part of the 50S ribosomal subunit.

Functionally, binds to the 23S rRNA. This is Large ribosomal subunit protein uL15 from Klebsiella pneumoniae (strain 342).